The primary structure comprises 423 residues: Mannan endo-1,4-beta-mannosidase (423 aa).

A signal peptide spans 1–27; the sequence is MKTITTARLPWAAQSFALGICLIALLG. The 354-residue stretch at 56–409 folds into the GH26 domain; sequence METRSLFAFM…YADEFTAFNR (354 aa). Positions 121, 143, and 162 each coordinate substrate. The active-site Proton donor is the E212. Positions 217 and 285 each coordinate substrate. E320 functions as the Nucleophile in the catalytic mechanism. Residues 360–361 and H377 contribute to the substrate site; that span reads WR.

This sequence belongs to the glycosyl hydrolase 26 family. Homodimer.

It carries out the reaction Random hydrolysis of (1-&gt;4)-beta-D-mannosidic linkages in mannans, galactomannans and glucomannans.. Functionally, catalyzes the endo hydrolysis of beta-1,4-linked mannan and galactomannan, but displays little activity towards other polysaccharides located in the plant cell wall. Preferentially hydrolyzes the larger oligosaccharides and has greater activity against non-substituted polysaccharides. It displays tight specificity for mannose at both the -2 and the -1 subsites. Appears to act in synergy with alpha-galactosidase (AgaA) to elicit hydrolysis of galactomannan. The chain is Mannan endo-1,4-beta-mannosidase from Cellvibrio japonicus (strain Ueda107) (Pseudomonas fluorescens subsp. cellulosa).